A 79-amino-acid chain; its full sequence is Ketoisovalerate oxidoreductase subunit VorC (79 aa).

2 4Fe-4S ferredoxin-type domains span residues 4–33 and 40–70; these read AYPVINRVECKACERCIIACPRKVLYMSNK and HYVEYRGEGCNGCGNCYYTCPEINAIEVHIE. 8 residues coordinate [4Fe-4S] cluster: Cys13, Cys16, Cys19, Cys23, Cys49, Cys52, Cys55, and Cys59.

In terms of assembly, heterotrimer of the VorA, VorB and VorC subunits. [4Fe-4S] cluster serves as cofactor.

It carries out the reaction 3-methyl-2-oxobutanoate + 2 oxidized [2Fe-2S]-[ferredoxin] + CoA = 2-methylpropanoyl-CoA + 2 reduced [2Fe-2S]-[ferredoxin] + CO2 + H(+). This Methanothermobacter marburgensis (strain ATCC BAA-927 / DSM 2133 / JCM 14651 / NBRC 100331 / OCM 82 / Marburg) (Methanobacterium thermoautotrophicum) protein is Ketoisovalerate oxidoreductase subunit VorC (vorC).